The following is a 226-amino-acid chain: UPF0173 metal-dependent hydrolase CHY_0920 (226 aa).

The protein belongs to the UPF0173 family.

This chain is UPF0173 metal-dependent hydrolase CHY_0920, found in Carboxydothermus hydrogenoformans (strain ATCC BAA-161 / DSM 6008 / Z-2901).